The chain runs to 414 residues: N-carbamoyl-L-amino-acid amidohydrolase (414 aa).

A divalent metal cation is bound by residues His-83, Asp-94, Glu-129, and His-195. 5 residues coordinate an N-carbamoyl-L-alpha-amino acid: Gln-198, His-231, Asn-281, Arg-294, and Gly-363. The segment at 214 to 333 is involved in dimerization; sequence GIAGPSWFKV…QIEKNMAAVP (120 aa). A divalent metal cation is bound at residue His-388.

This sequence belongs to the peptidase M20 family. Homodimer. Mn(2+) is required as a cofactor. The cofactor is Ni(2+). Co(2+) serves as cofactor. It depends on Fe(2+) as a cofactor.

The catalysed reaction is an N-carbamoyl-L-alpha-amino acid + H2O + 2 H(+) = an L-alpha-amino acid + NH4(+) + CO2. The enzyme catalyses N-carbamoyl-L-methionine + H2O + 2 H(+) = L-methionine + NH4(+) + CO2. Its function is as follows. Catalyzes the hydrolysis of N-carbamoyl-L-alpha-amino acids to free L-alpha-amino acids. Is strictly L-specific since it is inactive toward N-carbamoyl-D-alpha-amino acids. This chain is N-carbamoyl-L-amino-acid amidohydrolase, found in Pseudomonas sp. (strain NS671).